The sequence spans 227 residues: GTP:AMP phosphotransferase AK3, mitochondrial (227 aa).

Positions 17, 19, 20, 21, and 22 each coordinate GTP. K20 is subject to N6-succinyllysine. Residue K29 is modified to N6-acetyllysine; alternate. K29 bears the N6-succinyllysine; alternate mark. K34 carries the N6-acetyllysine modification. The residue at position 37 (S37) is a Phosphoserine. An NMP region spans residues 37 to 66 (SSGDLLRQNMLQGTEIAVLAKSFIDQGKLI). AMP-binding residues include S38 and R43. Position 57 is an N6-succinyllysine (K57). N6-acetyllysine; alternate is present on residues K64 and K80. An N6-succinyllysine; alternate mark is found at K64 and K80. Residue K64 coordinates AMP. 3 residues coordinate AMP: G91, R94, and Q98. Residues 127–164 (ARWIHPASGRVYNIEFNPPKTVGIDDLTGEPLIQREDD) are LID. R128, Y138, N139, R161, and R172 together coordinate GTP. Residues K174 and K189 each carry the N6-acetyllysine; alternate modification. N6-succinyllysine; alternate occurs at positions 174 and 189. GTP is bound at residue T201. K203 carries the N6-acetyllysine modification.

The protein belongs to the adenylate kinase family. AK3 subfamily. Monomer.

Its subcellular location is the mitochondrion matrix. It carries out the reaction a ribonucleoside 5'-triphosphate + AMP = a ribonucleoside 5'-diphosphate + ADP. The catalysed reaction is GTP + AMP = GDP + ADP. It catalyses the reaction ITP + AMP = IDP + ADP. Functionally, mitochondrial adenylate kinase with a specific GTP:AMP phosphotransferase activity. Could also use ITP as phosphate donor. Its physiological function is to recycle GTP into GDP which is necessary for the TCA cycle in the mitochondrial matrix. In Rattus norvegicus (Rat), this protein is GTP:AMP phosphotransferase AK3, mitochondrial.